Here is a 287-residue protein sequence, read N- to C-terminus: 2-dehydro-3-deoxyphosphooctonate aldolase (287 aa).

It belongs to the KdsA family.

It is found in the cytoplasm. It catalyses the reaction D-arabinose 5-phosphate + phosphoenolpyruvate + H2O = 3-deoxy-alpha-D-manno-2-octulosonate-8-phosphate + phosphate. The protein operates within carbohydrate biosynthesis; 3-deoxy-D-manno-octulosonate biosynthesis; 3-deoxy-D-manno-octulosonate from D-ribulose 5-phosphate: step 2/3. It functions in the pathway bacterial outer membrane biogenesis; lipopolysaccharide biosynthesis. The protein is 2-dehydro-3-deoxyphosphooctonate aldolase of Rhodopseudomonas palustris (strain HaA2).